We begin with the raw amino-acid sequence, 189 residues long: Peptide deformylase (189 aa).

Residues Cys98 and His140 each coordinate Fe cation. Residue Glu141 is part of the active site. His144 lines the Fe cation pocket.

This sequence belongs to the polypeptide deformylase family. Fe(2+) is required as a cofactor.

It catalyses the reaction N-terminal N-formyl-L-methionyl-[peptide] + H2O = N-terminal L-methionyl-[peptide] + formate. Functionally, removes the formyl group from the N-terminal Met of newly synthesized proteins. Requires at least a dipeptide for an efficient rate of reaction. N-terminal L-methionine is a prerequisite for activity but the enzyme has broad specificity at other positions. The chain is Peptide deformylase from Porphyromonas gingivalis (strain ATCC 33277 / DSM 20709 / CIP 103683 / JCM 12257 / NCTC 11834 / 2561).